A 436-amino-acid polypeptide reads, in one-letter code: MHIVVVGVSHRTAPVEVREKLSIPDHSITESLKALKAFSEVLEVSILSTCNRLEIYALAKDKNTGISSIKEFLSEYSGIIFEDLDPHLFCFRQEEAVLHLMKVSAGLDSLVLGEGQILSQVKKMMRLGQENQSTGPILNRLLTQSVSTGKKVRSETNLGTGAVSISSAAVELAQLKIGQEKGFDTLVSLESENVLVVGAGRMSRLLITHLKSKGCHKLILVNRNIDRALNLAQDFPDLKIVCRGLNELDENISISSLVFTSTASEVPIIDLAKIEKLNLNNKLKFIDIGVPRNISNDVKQHEFVKSFDVDDLQEVVSRNQEFRQKIAKEAESLVEEERIIFLEWWASLEAVPVINKLRSDLELIRKEELQKALSRMGPDFSARERKVVEALTKGIINKILHTPVTKLRSPQSREERQVSLKIVEKLFSLAEEDKNN.

Substrate contacts are provided by residues 49–52 (TCNR), Ser-109, 114–116 (EGQ), and Gln-120. Cys-50 acts as the Nucleophile in catalysis. 198 to 203 (GAGRMS) is a binding site for NADP(+).

The protein belongs to the glutamyl-tRNA reductase family. As to quaternary structure, homodimer.

It catalyses the reaction (S)-4-amino-5-oxopentanoate + tRNA(Glu) + NADP(+) = L-glutamyl-tRNA(Glu) + NADPH + H(+). The protein operates within porphyrin-containing compound metabolism; protoporphyrin-IX biosynthesis; 5-aminolevulinate from L-glutamyl-tRNA(Glu): step 1/2. Its pathway is porphyrin-containing compound metabolism; chlorophyll biosynthesis. Its function is as follows. Catalyzes the NADPH-dependent reduction of glutamyl-tRNA(Glu) to glutamate 1-semialdehyde (GSA). In Prochlorococcus marinus (strain MIT 9215), this protein is Glutamyl-tRNA reductase.